Consider the following 327-residue polypeptide: BTB/POZ domain-containing protein KCTD12 (327 aa).

Residues 1–28 (MALADSARGLPNGGGGGGGSGSSSSSAE) are disordered. A2 carries the post-translational modification N-acetylalanine. The span at 11–21 (PNGGGGGGGSG) shows a compositional bias: gly residues. Y119 bears the Phosphotyrosine mark. The interval 129-204 (LGAPQQPGPG…PLLTPSQSLD (76 aa)) is disordered. Phosphoserine is present on residues S153, S173, and S187. Residue T198 is modified to Phosphothreonine. At S202 the chain carries Phosphoserine.

In terms of assembly, interacts as a tetramer with GABBR1 and GABBR2. As to expression, expressed in the brain, mainly in the hippocampus and cerebellum.

It is found in the presynaptic cell membrane. Its subcellular location is the postsynaptic cell membrane. Its function is as follows. Auxiliary subunit of GABA-B receptors that determine the pharmacology and kinetics of the receptor response. Increases agonist potency and markedly alter the G-protein signaling of the receptors by accelerating onset and promoting desensitization. The sequence is that of BTB/POZ domain-containing protein KCTD12 (Kctd12) from Mus musculus (Mouse).